A 1934-amino-acid chain; its full sequence is Myosin-7 (1934 aa).

Residues 31–80 (DLKKDVFVPDDKEEFVKAKIVSREGGKVTAETENGKTVTVKEDQVMQQNP) enclose the Myosin N-terminal SH3-like domain. In terms of domain architecture, Myosin motor spans 84–777 (DKIEDMAMLT…LLGLLEEMRD (694 aa)). Residue K128 is modified to N6,N6,N6-trimethyllysine. Position 177 to 184 (177 to 184 (GESGAGKT)) interacts with ATP. Position 377 is a phosphothreonine (T377). Actin-binding regions lie at residues 654–676 (LNKLMTNLRSTHPHFVRCIIPNE) and 756–770 (KFGHTKVFFKAGLLG). In terms of domain architecture, IQ spans 780 to 809 (LSRIITRIQAQSRGLLSRMEFKKLLERRDS). A coiled-coil region spans residues 839 to 1934 (LKSAETEKEM…DIGAKGLNEE (1096 aa)). Phosphoserine is present on residues S1136 and S1268. The residue at position 1281 (T1281) is a Phosphothreonine. Y1307 bears the Phosphotyrosine mark. A Phosphothreonine modification is found at T1308. Residue S1509 is modified to Phosphoserine. Position 1512 is a phosphothreonine (T1512). The tract at residues 1914–1934 (SQVNKLRAKSRDIGAKGLNEE) is disordered. The span at 1922 to 1934 (KSRDIGAKGLNEE) shows a compositional bias: basic and acidic residues.

This sequence belongs to the TRAFAC class myosin-kinesin ATPase superfamily. Myosin family. In terms of assembly, muscle myosin is a hexameric protein that consists of 2 heavy chain subunits (MHC), 2 alkali light chain subunits (MLC) and 2 regulatory light chain subunits (MLC-2). Interacts with ECPAS. Interacts (via C-terminus) with LRRC39.

It localises to the cytoplasm. The protein resides in the myofibril. The protein localises to the sarcomere. Its function is as follows. Myosins are actin-based motor molecules with ATPase activity essential for muscle contraction. Forms regular bipolar thick filaments that, together with actin thin filaments, constitute the fundamental contractile unit of skeletal and cardiac muscle. This is Myosin-7 (MYH7) from Mesocricetus auratus (Golden hamster).